A 224-amino-acid chain; its full sequence is 7-cyano-7-deazaguanine synthase (224 aa).

8-18 (LSGGMDSAAVI) is a binding site for ATP. Zn(2+)-binding residues include C186, C196, C199, and C202.

This sequence belongs to the QueC family. Zn(2+) is required as a cofactor.

It catalyses the reaction 7-carboxy-7-deazaguanine + NH4(+) + ATP = 7-cyano-7-deazaguanine + ADP + phosphate + H2O + H(+). Its pathway is purine metabolism; 7-cyano-7-deazaguanine biosynthesis. Catalyzes the ATP-dependent conversion of 7-carboxy-7-deazaguanine (CDG) to 7-cyano-7-deazaguanine (preQ(0)). In Xanthomonas euvesicatoria pv. vesicatoria (strain 85-10) (Xanthomonas campestris pv. vesicatoria), this protein is 7-cyano-7-deazaguanine synthase.